A 357-amino-acid polypeptide reads, in one-letter code: tRNA/tmRNA (uracil-C(5))-methyltransferase (357 aa).

S-adenosyl-L-methionine-binding residues include Gln180, Tyr209, Asn214, Glu230, and Asp290. Residue Cys315 is the Nucleophile of the active site. Glu349 functions as the Proton acceptor in the catalytic mechanism.

The protein belongs to the class I-like SAM-binding methyltransferase superfamily. RNA M5U methyltransferase family. TrmA subfamily.

It catalyses the reaction uridine(54) in tRNA + S-adenosyl-L-methionine = 5-methyluridine(54) in tRNA + S-adenosyl-L-homocysteine + H(+). The catalysed reaction is uridine(341) in tmRNA + S-adenosyl-L-methionine = 5-methyluridine(341) in tmRNA + S-adenosyl-L-homocysteine + H(+). In terms of biological role, dual-specificity methyltransferase that catalyzes the formation of 5-methyluridine at position 54 (m5U54) in all tRNAs, and that of position 341 (m5U341) in tmRNA (transfer-mRNA). This Campylobacter jejuni subsp. jejuni serotype O:2 (strain ATCC 700819 / NCTC 11168) protein is tRNA/tmRNA (uracil-C(5))-methyltransferase.